We begin with the raw amino-acid sequence, 228 residues long: Large ribosomal subunit protein uL3 (228 aa).

Glutamine 151 bears the N5-methylglutamine mark.

Belongs to the universal ribosomal protein uL3 family. Part of the 50S ribosomal subunit. Forms a cluster with proteins L14 and L19. In terms of processing, methylated by PrmB.

In terms of biological role, one of the primary rRNA binding proteins, it binds directly near the 3'-end of the 23S rRNA, where it nucleates assembly of the 50S subunit. This is Large ribosomal subunit protein uL3 from Rhizobium meliloti (strain 1021) (Ensifer meliloti).